Reading from the N-terminus, the 391-residue chain is Nuclear hormone receptor family member nhr-115 (391 aa).

The nuclear receptor DNA-binding region spans 5–77 (LFPCQICGQN…IGMDASKFQY (73 aa)). An NR C4-type zinc finger spans residues 8–28 (CQICGQNSHGTHFGIVSCRAC). An NR C4-type; atypical zinc finger spans residues 41-65 (ARKGCLTNFKDKGSCFCKPCRLRKC). One can recognise an NR LBD domain in the interval 130–388 (YLDHGCETPI…FSHPEMFDDS (259 aa)).

It belongs to the nuclear hormone receptor family.

The protein resides in the nucleus. In terms of biological role, orphan nuclear receptor. The sequence is that of Nuclear hormone receptor family member nhr-115 (nhr-115) from Caenorhabditis elegans.